The chain runs to 729 residues: Fatty acid oxidation complex subunit alpha (729 aa).

The segment at 1–189 (MLYKGDTLYL…KIGLVDGVVK (189 aa)) is enoyl-CoA hydratase/isomerase. Asp-296 is a substrate binding site. Residues 311–729 (ETPKQAAVLG…ARPVGDLKTA (419 aa)) form a 3-hydroxyacyl-CoA dehydrogenase region. NAD(+) contacts are provided by residues Met-324, Asp-343, 400-402 (VVE), Lys-407, and Ser-429. His-450 acts as the For 3-hydroxyacyl-CoA dehydrogenase activity in catalysis. NAD(+) is bound at residue Asn-453. Positions 500 and 660 each coordinate substrate. The segment at 708–729 (RHNEPYYPPVEPARPVGDLKTA) is disordered.

In the N-terminal section; belongs to the enoyl-CoA hydratase/isomerase family. The protein in the C-terminal section; belongs to the 3-hydroxyacyl-CoA dehydrogenase family. In terms of assembly, heterotetramer of two alpha chains (FadB) and two beta chains (FadA).

The enzyme catalyses a (3S)-3-hydroxyacyl-CoA + NAD(+) = a 3-oxoacyl-CoA + NADH + H(+). It catalyses the reaction a (3S)-3-hydroxyacyl-CoA = a (2E)-enoyl-CoA + H2O. The catalysed reaction is a 4-saturated-(3S)-3-hydroxyacyl-CoA = a (3E)-enoyl-CoA + H2O. It carries out the reaction (3S)-3-hydroxybutanoyl-CoA = (3R)-3-hydroxybutanoyl-CoA. The enzyme catalyses a (3Z)-enoyl-CoA = a 4-saturated (2E)-enoyl-CoA. It catalyses the reaction a (3E)-enoyl-CoA = a 4-saturated (2E)-enoyl-CoA. It functions in the pathway lipid metabolism; fatty acid beta-oxidation. Its function is as follows. Involved in the aerobic and anaerobic degradation of long-chain fatty acids via beta-oxidation cycle. Catalyzes the formation of 3-oxoacyl-CoA from enoyl-CoA via L-3-hydroxyacyl-CoA. It can also use D-3-hydroxyacyl-CoA and cis-3-enoyl-CoA as substrate. This chain is Fatty acid oxidation complex subunit alpha, found in Shigella flexneri serotype 5b (strain 8401).